A 414-amino-acid chain; its full sequence is Serine/threonine transporter SstT (414 aa).

8 helical membrane passes run 22–42 (GLVL…TIGF), 54–74 (IFVK…VMAA), 89–109 (IIVL…IAGF), 148–168 (AIFK…GLAL), 189–209 (IVHV…AETL), 223–243 (LLAV…PILV), 305–325 (MAGA…TLGL), and 337–357 (IVAA…LLLI).

Belongs to the dicarboxylate/amino acid:cation symporter (DAACS) (TC 2.A.23) family.

The protein localises to the cell inner membrane. It carries out the reaction L-serine(in) + Na(+)(in) = L-serine(out) + Na(+)(out). The enzyme catalyses L-threonine(in) + Na(+)(in) = L-threonine(out) + Na(+)(out). In terms of biological role, involved in the import of serine and threonine into the cell, with the concomitant import of sodium (symport system). The protein is Serine/threonine transporter SstT of Haemophilus influenzae (strain PittGG).